Consider the following 200-residue polypeptide: Small ribosomal subunit protein eS8A (200 aa).

Disordered stretches follow at residues 1–40 (MGIT…RIGP) and 123–145 (SKGK…KHSA). Basic residues predominate over residues 135-145 (KSKHVQRKHSA).

It belongs to the eukaryotic ribosomal protein eS8 family. Component of the small ribosomal subunit (SSU). Mature yeast ribosomes consist of a small (40S) and a large (60S) subunit. The 40S small subunit contains 1 molecule of ribosomal RNA (18S rRNA) and at least 33 different proteins. The large 60S subunit contains 3 rRNA molecules (25S, 5.8S and 5S rRNA) and at least 46 different proteins.

The protein resides in the cytoplasm. Its function is as follows. Component of the ribosome, a large ribonucleoprotein complex responsible for the synthesis of proteins in the cell. The small ribosomal subunit (SSU) binds messenger RNAs (mRNAs) and translates the encoded message by selecting cognate aminoacyl-transfer RNA (tRNA) molecules. The large subunit (LSU) contains the ribosomal catalytic site termed the peptidyl transferase center (PTC), which catalyzes the formation of peptide bonds, thereby polymerizing the amino acids delivered by tRNAs into a polypeptide chain. The nascent polypeptides leave the ribosome through a tunnel in the LSU and interact with protein factors that function in enzymatic processing, targeting, and the membrane insertion of nascent chains at the exit of the ribosomal tunnel. In Schizosaccharomyces pombe (strain 972 / ATCC 24843) (Fission yeast), this protein is Small ribosomal subunit protein eS8A (rps801).